Reading from the N-terminus, the 1019-residue chain is Sca1 complex protein phr (1019 aa).

Disordered stretches follow at residues 89-118 (IVINSSSSSSSSSSHHPHHQKTPSNSSSNF), 131-202 (AFNN…INNN), 265-287 (QQLNQNGGSNNGSTSNSTSNSAN), and 512-546 (STNNNNSGNNSNNNNGNSNGNSSNNNSNNNSTNNL). The segment covering 93–102 (SSSSSSSSSS) has biased composition (low complexity). A compositionally biased stretch (basic and acidic residues) spans 141–155 (NRKEKEKDKDKDHQD). Residues 158–188 (NINNINNINNNINNNINNNNNNNNNNNNNNN) adopt a coiled-coil conformation. Over residues 158–202 (NINNINNINNNINNNINNNNNNNNNNNNNNNMHNPTSSSPSINNN) the composition is skewed to low complexity. Positions 735–836 (EIKKKGYLFK…WIKAIKFNCF (102 aa)) constitute a PH domain. Low complexity predominate over residues 860–872 (VAGSGSNNGNNNG). 3 disordered regions span residues 860–890 (VAGSGSNNGNNNGHLKRSDTTQQLNNSGSFI), 904–951 (NLSI…QQQL), and 977–1019 (SSYT…SKLK). Residues 879–890 (TTQQLNNSGSFI) show a composition bias toward polar residues. The span at 977–986 (SSYTDSMSGS) shows a compositional bias: low complexity. Polar residues predominate over residues 987–1019 (PPDSNGQVFPQSPQLKKTLFQRTTSFSKGSKLK).

As to quaternary structure, component of the Sca1 complex composed of at least gefA, gefH, scaA, phr, and the protein phosphatase 2A subunits pppA and pho2B. Interacts directly with gefH.

The protein localises to the cell membrane. Its function is as follows. Component of the Sca1 complex, a regulator of cell motility, chemotaxis and signal relay. The Sca1 complex is recruited to the plasma membrane in a chemoattractant- and F-actin-dependent manner and is enriched at the leading edge of chemotaxing cells where it regulates F-actin dynamics and signal relay by controlling the activation of rasC and the downstream target of rapamycin complex 2 (TORC2)-Akt/protein kinase B (PKB) pathway. The sequence is that of Sca1 complex protein phr from Dictyostelium discoideum (Social amoeba).